We begin with the raw amino-acid sequence, 131 residues long: MSMHDPIADMLTRIRNGQQAKHQQVTLVSSKLKEEIARVLKEEGYIQDFFTETLPNGLKSITLKLKYYHGRPVIEFIKRISRPGLRVYKSYKDLHSIPGFGVAILSTSKGIMTHVSAKVKGVGGEVICEVA.

Belongs to the universal ribosomal protein uS8 family. As to quaternary structure, part of the 30S ribosomal subunit. Contacts proteins S5 and S12.

Functionally, one of the primary rRNA binding proteins, it binds directly to 16S rRNA central domain where it helps coordinate assembly of the platform of the 30S subunit. The chain is Small ribosomal subunit protein uS8 from Legionella pneumophila (strain Paris).